The primary structure comprises 305 residues: Protoheme IX farnesyltransferase (305 aa).

Helical transmembrane passes span 29 to 49 (VTQL…PGMV), 51 to 71 (WSVL…AFAI), 101 to 121 (TLIF…VFAN), 123 to 143 (LTMW…TILL), 151 to 171 (IVIG…AVSG), 177 to 197 (AWFL…ALAL), 221 to 241 (LLHI…PFVY), 244 to 264 (SGYI…GYAW), and 283 to 303 (ILYL…KFVP).

The protein belongs to the UbiA prenyltransferase family. Protoheme IX farnesyltransferase subfamily.

It localises to the cell inner membrane. The enzyme catalyses heme b + (2E,6E)-farnesyl diphosphate + H2O = Fe(II)-heme o + diphosphate. The protein operates within porphyrin-containing compound metabolism; heme O biosynthesis; heme O from protoheme: step 1/1. In terms of biological role, converts heme B (protoheme IX) to heme O by substitution of the vinyl group on carbon 2 of heme B porphyrin ring with a hydroxyethyl farnesyl side group. The chain is Protoheme IX farnesyltransferase from Cupriavidus metallidurans (strain ATCC 43123 / DSM 2839 / NBRC 102507 / CH34) (Ralstonia metallidurans).